The sequence spans 485 residues: GTPase Der (485 aa).

EngA-type G domains are found at residues 3–167 (PTIA…PEPE) and 176–349 (PVFA…NAAM). GTP contacts are provided by residues 9-16 (GRPNVGKS), 56-60 (DTGGF), 119-122 (NKGE), 182-189 (GRPNVGKS), 229-233 (DTAGV), and 294-297 (NKWD). The KH-like domain maps to 350 to 434 (IKMPTPKITR…PLRIQYNVSE (85 aa)). Positions 435-485 (NPYENAEDKPKKKPLRRVSLSNRIEKREGRKEEKNRFKKKTKVSVKKQFSK) are disordered. The span at 457-469 (RIEKREGRKEEKN) shows a compositional bias: basic and acidic residues. The span at 470–485 (RFKKKTKVSVKKQFSK) shows a compositional bias: basic residues.

This sequence belongs to the TRAFAC class TrmE-Era-EngA-EngB-Septin-like GTPase superfamily. EngA (Der) GTPase family. As to quaternary structure, associates with the 50S ribosomal subunit.

GTPase that plays an essential role in the late steps of ribosome biogenesis. The sequence is that of GTPase Der from Neisseria gonorrhoeae (strain NCCP11945).